Reading from the N-terminus, the 496-residue chain is Lysine--tRNA ligase (496 aa).

Positions 408 and 415 each coordinate Mg(2+).

Belongs to the class-II aminoacyl-tRNA synthetase family. As to quaternary structure, homodimer. Requires Mg(2+) as cofactor.

Its subcellular location is the cytoplasm. It carries out the reaction tRNA(Lys) + L-lysine + ATP = L-lysyl-tRNA(Lys) + AMP + diphosphate. This Legionella pneumophila (strain Lens) protein is Lysine--tRNA ligase.